The sequence spans 2148 residues: Polyketide synthase 1 (2148 aa).

The tract at residues 19–261 (FIFGDQSSCN…TPLAVHAPYH (243 aa)) is N-terminal acylcarrier protein transacylase domain (SAT). The 436-residue stretch at 394–829 (ESKIAIIGMS…GGNTALLVED (436 aa)) folds into the Ketosynthase family 3 (KS3) domain. Active-site for beta-ketoacyl synthase activity residues include Cys-566, His-701, and His-745. The tract at residues 929–1233 (AFVFSGQGSQ…PSLMRNKDGW (305 aa)) is malonyl-CoA:ACP transacylase (MAT) domain. Residue Ser-1018 is the For acyl/malonyl transferase activity of the active site. Residues 1310 to 1624 (TASVHRIVHE…RKVLNTAMPP (315 aa)) form a product template (PT) domain region. Residues 1314–1447 (HRIVHESVEK…SSLHFEQPKV (134 aa)) form an N-terminal hotdog fold region. One can recognise a PKS/mFAS DH domain in the interval 1314–1619 (HRIVHESVEK…FQGIPRKVLN (306 aa)). The active-site Proton acceptor; for dehydratase activity is His-1346. The tract at residues 1474-1619 (LNSRMSSGVI…FQGIPRKVLN (146 aa)) is C-terminal hotdog fold. Catalysis depends on Asp-1533, which acts as the Proton donor; for dehydratase activity. The interval 1619-1655 (NTAMPPPKSQNEAPVRSGPAKPAVKPPRSASSEHSGH) is disordered. The Carrier 1 domain maps to 1678 to 1752 (RNPMLPVFKI…DLAAHLGMDT (75 aa)). An O-(pantetheine 4'-phosphoryl)serine modification is found at Ser-1712. Positions 1755–1790 (ADQSSGQSSSSGGLSPRSDSIGEMTSSATTPPSMSP) are enriched in low complexity. The interval 1755–1796 (ADQSSGQSSSSGGLSPRSDSIGEMTSSATTPPSMSPRGSVSG) is disordered. Residues 1793–1870 (SVSGSQCKDV…SFKHMFQQGH (78 aa)) enclose the Carrier 2 domain. Ser-1830 is subject to O-(pantetheine 4'-phosphoryl)serine. The tract at residues 1882-2146 (LKQYRATSTL…ERVAAFIRSI (265 aa)) is thioesterase (TE) domain. Catalysis depends on Ser-1973, which acts as the For thioesterase activity.

In terms of biological role, polyketide synthase; part of the Pks1 gene cluster that mediates the biosynthesis of an anthraquinone derivative pigment that contributes to conidial pigmentation that provides protection from UV radiation, heat and cold stress. The polyketide synthase Pks1 produces 1-acetyl-2,4,6,8-tetrahydroxy-9,10-anthraquinone though condensation of acetyl-CoA with malonyl-CoA. The dehydratase EthD and the laccase Mlac1 further convert the anthraquinone derivative into the final conidial pigment. The chain is Polyketide synthase 1 from Metarhizium brunneum (strain ARSEF 3297).